We begin with the raw amino-acid sequence, 130 residues long: Small ribosomal subunit protein uS8 (130 aa).

The protein belongs to the universal ribosomal protein uS8 family. As to quaternary structure, part of the 30S ribosomal subunit. Contacts proteins S5 and S12.

One of the primary rRNA binding proteins, it binds directly to 16S rRNA central domain where it helps coordinate assembly of the platform of the 30S subunit. This chain is Small ribosomal subunit protein uS8, found in Shewanella halifaxensis (strain HAW-EB4).